The primary structure comprises 186 residues: Peptidyl-tRNA hydrolase (186 aa).

Y14 is a binding site for tRNA. The active-site Proton acceptor is H19. Y64, N66, and N112 together coordinate tRNA.

Belongs to the PTH family. In terms of assembly, monomer.

It localises to the cytoplasm. It carries out the reaction an N-acyl-L-alpha-aminoacyl-tRNA + H2O = an N-acyl-L-amino acid + a tRNA + H(+). In terms of biological role, hydrolyzes ribosome-free peptidyl-tRNAs (with 1 or more amino acids incorporated), which drop off the ribosome during protein synthesis, or as a result of ribosome stalling. Its function is as follows. Catalyzes the release of premature peptidyl moieties from peptidyl-tRNA molecules trapped in stalled 50S ribosomal subunits, and thus maintains levels of free tRNAs and 50S ribosomes. This Bacillus cereus (strain ATCC 10987 / NRS 248) protein is Peptidyl-tRNA hydrolase.